Here is a 244-residue protein sequence, read N- to C-terminus: 14-3-3 protein beta/alpha-B (244 aa).

N-acetylmethionine is present on Met-1.

This sequence belongs to the 14-3-3 family. In terms of assembly, homodimer, and heterodimer with other family members.

It localises to the cytoplasm. Its function is as follows. Adapter protein implicated in the regulation of a large spectrum of both general and specialized signaling pathways. Binds to a large number of partners, usually by recognition of a phosphoserine or phosphothreonine motif. Binding generally results in the modulation of the activity of the binding partner. The protein is 14-3-3 protein beta/alpha-B (ywhab-b) of Xenopus laevis (African clawed frog).